Consider the following 534-residue polypeptide: Dolichol kinase (534 aa).

Residues 1–16 (MTRQCPPQESGAALSG) lie on the Cytoplasmic side of the membrane. Residues 17–37 (SVLAEAAVVFAVVLSIHAAVW) form a helical membrane-spanning segment. Residues 38–72 (DRYSWCAVALAVQAFYVQYKWDRLLQQGNAVFQFR) are Extracellular-facing. The helical transmembrane segment at 73–93 (MSANSGLLPASMVMPLLGLVM) threads the bilayer. The Cytoplasmic segment spans residues 94 to 109 (KERCQTAGNPYFERFG). A helical transmembrane segment spans residues 110 to 130 (IVVAATGMAVALFSSVLALGI). The Extracellular portion of the chain corresponds to 131 to 132 (TR). Residues 133–153 (PVPTNTCAISGLAGGVIIYIM) traverse the membrane as a helical segment. The Cytoplasmic segment spans residues 154–161 (RHSLSVGE). A helical transmembrane segment spans residues 162-182 (VIEVLEVLLIFVYLNMILLYL). Topologically, residues 183–186 (LPRC) are extracellular. Residues 187-207 (FTPGEALLVLGGISFVLNQLI) traverse the membrane as a helical segment. Residues 208-220 (KRSLTESQGDPVD) are Cytoplasmic-facing. The helical transmembrane segment at 221 to 241 (FFLLVVVVGMVLMGVFFSTLF) threads the bilayer. Over 242-252 (VFMDSGTWASS) the chain is Extracellular. A helical membrane pass occupies residues 253 to 273 (IFFHLMTCVLGLGVVLPWLHW). Residues 274 to 293 (LIRRNPLLWLLQFLFYTETR) are Cytoplasmic-facing. A helical membrane pass occupies residues 294 to 314 (IYLLAYWSLLASVACLVVLYQ). Over 315–333 (NAKRSSSESKKHRAPTITR) the chain is Extracellular. Residues 334 to 350 (KYFHFIVVATYIPGIIF) traverse the membrane as a helical segment. At 351–355 (DRPLL) the chain is on the cytoplasmic side. The helical transmembrane segment at 356–376 (YVAATVCLAVFIFLEYVRYFR) threads the bilayer. At 377–397 (IKPLGHTLRSLLSLFLDERDS) the chain is on the extracellular side. The chain crosses the membrane as a helical span at residues 398–418 (GPLILTHIYLLLGMSLPIWLI). Residues 419-432 (PRPCTQKDSLEGAR) are Cytoplasmic-facing. Residues 433 to 453 (ALVPYAGVLAVGVGDTVASIF) traverse the membrane as a helical segment. Topologically, residues 454–468 (GSTMGEIRWPGTKKT) are extracellular. The interval 455–470 (STMGEIRWPGTKKTFE) is CTP-binding. A helical transmembrane segment spans residues 469–489 (FEGTMTSIFAQIISVALILIF). The Cytoplasmic portion of the chain corresponds to 490–491 (DS). A helical transmembrane segment spans residues 492–512 (GVDLNYSYAWILGSISTVSLL). At 513–534 (EAYTTQIDNLLLPLYLLILLMA) the chain is on the extracellular side.

This sequence belongs to the polyprenol kinase family.

It is found in the endoplasmic reticulum membrane. It carries out the reaction a di-trans,poly-cis-dolichol + CTP = a di-trans,poly-cis-dolichyl phosphate + CDP + H(+). The protein operates within protein modification; protein glycosylation. Its function is as follows. Catalyzes CTP-mediated phosphorylation of dolichol, the terminal step in de novo dolichyl monophosphate (Dol-P) biosynthesis. Dol-P is a lipid carrier essential for the synthesis of N-linked and O-linked oligosaccharides and for GPI anchors. The protein is Dolichol kinase of Mus musculus (Mouse).